The following is a 346-amino-acid chain: N-acetyl-gamma-glutamyl-phosphate reductase (346 aa).

Cys-149 is a catalytic residue.

It belongs to the NAGSA dehydrogenase family. Type 1 subfamily.

The protein localises to the cytoplasm. It carries out the reaction N-acetyl-L-glutamate 5-semialdehyde + phosphate + NADP(+) = N-acetyl-L-glutamyl 5-phosphate + NADPH + H(+). It participates in amino-acid biosynthesis; L-arginine biosynthesis; N(2)-acetyl-L-ornithine from L-glutamate: step 3/4. In terms of biological role, catalyzes the NADPH-dependent reduction of N-acetyl-5-glutamyl phosphate to yield N-acetyl-L-glutamate 5-semialdehyde. This chain is N-acetyl-gamma-glutamyl-phosphate reductase, found in Citrifermentans bemidjiense (strain ATCC BAA-1014 / DSM 16622 / JCM 12645 / Bem) (Geobacter bemidjiensis).